Reading from the N-terminus, the 200-residue chain is Holliday junction branch migration complex subunit RuvA (200 aa).

Residues 1-64 (MITSIQGTLV…EDSQTLYGFA (64 aa)) form a domain I region. The segment at 65 to 144 (SPAERDFFRL…ATGAAPGLAT (80 aa)) is domain II. The segment at 145 to 151 (QPAAAAS) is flexible linker. The domain III stretch occupies residues 152 to 200 (PGASAHRDAVAALVALGYRSADADEAVRRASLALGEAATTESLIKKALS).

Belongs to the RuvA family. In terms of assembly, homotetramer. Forms an RuvA(8)-RuvB(12)-Holliday junction (HJ) complex. HJ DNA is sandwiched between 2 RuvA tetramers; dsDNA enters through RuvA and exits via RuvB. An RuvB hexamer assembles on each DNA strand where it exits the tetramer. Each RuvB hexamer is contacted by two RuvA subunits (via domain III) on 2 adjacent RuvB subunits; this complex drives branch migration. In the full resolvosome a probable DNA-RuvA(4)-RuvB(12)-RuvC(2) complex forms which resolves the HJ.

Its subcellular location is the cytoplasm. The RuvA-RuvB-RuvC complex processes Holliday junction (HJ) DNA during genetic recombination and DNA repair, while the RuvA-RuvB complex plays an important role in the rescue of blocked DNA replication forks via replication fork reversal (RFR). RuvA specifically binds to HJ cruciform DNA, conferring on it an open structure. The RuvB hexamer acts as an ATP-dependent pump, pulling dsDNA into and through the RuvAB complex. HJ branch migration allows RuvC to scan DNA until it finds its consensus sequence, where it cleaves and resolves the cruciform DNA. In Opitutus terrae (strain DSM 11246 / JCM 15787 / PB90-1), this protein is Holliday junction branch migration complex subunit RuvA.